A 628-amino-acid chain; its full sequence is MKQLLCYLPWLLLLTLLVSPLNDARFVVEKNSLSVTSPESIKGTHDSAIGNFGIPQYGGSMAGTVVYPKENQKSCKEFSDFSISFKSQPGALPTFLLVDRGDCFFALKVWNAQKAGASAVLVADNVDEPLITMDTPEEDVSSAKYIENITIPSALVTKGFGEKLKKAISGGDMVNLNLDWREAVPHPDDRVEYELWTNSNDECGVKCDMLMEFVKDFKGAAQILEKGGFTQFRPHYITWYCPHAFTLSRQCKSQCINKGRYCAPDPEQDFSSGYDGKDVVVENLRQLCVYKVANETGKPWVWWDYVTDFQIRCPMKEKKYNKECADSVIKSLGIDSKKLDKCMGDPDADLDNPVLKEEQDAQVGKGSRGDVTILPTLVVNNRQYRGKLEKSAVLKALCSGFEETTEPAICLSTDVESNECLDNNGGCWQDKSANITACKDTFRGRVCECPTVDGVQFKGDGYSHCEPSGPGRCTINNGGCWHEERDGHAFSACVDKDSVKCECPPGFKGDGTKKCEDINECKEKKACQCPECSCKNTWGSYECSCSGDLLYIRDHDTCISKTGAQVRSAWAAVWLIMLSLGLAAAGAYLVYKYRLRQYMDSEIRAIMAQYMPLDSQPEIPNHVNDERA.

An N-terminal signal peptide occupies residues 1 to 24; it reads MKQLLCYLPWLLLLTLLVSPLNDA. Over 25-569 the chain is Lumenal; it reads RFVVEKNSLS…SKTGAQVRSA (545 aa). One can recognise a PA domain in the interval 56–168; that stretch reads QYGGSMAGTV…GFGEKLKKAI (113 aa). N148, N294, and N434 each carry an N-linked (GlcNAc...) asparagine glycan. EGF-like domains follow at residues 416–466 and 469–516; these read ESNE…SHCE and GPGR…KKCE. 7 cysteine pairs are disulfide-bonded: C420–C438, C427–C447, C449–C465, C473–C493, C480–C501, C503–C515, and C545–C558. The EGF-like 3; calcium-binding domain maps to 517 to 559; that stretch reads DINECKEKKACQCPECSCKNTWGSYECSCSGDLLYIRDHDTCI. The chain crosses the membrane as a helical span at residues 570–590; the sequence is WAAVWLIMLSLGLAAAGAYLV. Residues 591–628 are Cytoplasmic-facing; that stretch reads YKYRLRQYMDSEIRAIMAQYMPLDSQPEIPNHVNDERA. Residues 610–613 carry the Tyrosine-based internalization motif motif; it reads YMPL.

This sequence belongs to the VSR (BP-80) family. In terms of tissue distribution, expressed in seeds, seedlings, roots, leaves, flowers and siliques.

Its subcellular location is the membrane. It localises to the golgi apparatus membrane. The protein resides in the cytoplasmic vesicle. It is found in the clathrin-coated vesicle membrane. The protein localises to the prevacuolar compartment membrane. Vacuolar-sorting receptor (VSR) involved in clathrin-coated vesicles sorting from Golgi apparatus to vacuoles. This is Vacuolar-sorting receptor 3 (VSR3) from Arabidopsis thaliana (Mouse-ear cress).